A 593-amino-acid chain; its full sequence is ESX-1 secretion system protein EccCb1 (593 aa).

2 consecutive FtsK domains span residues 66–260 (RQEV…NETQ) and 350–546 (QVPL…EKND). Residues 85 to 92 (GAPQTGKS) and 377 to 384 (GAPKSGKT) contribute to the ATP site.

As to quaternary structure, part of the ESX-1 / type VII secretion system (T7SS), which is composed of cytosolic and membrane components. The ESX-1 membrane complex is composed of EccB1, EccCa1, EccCb1, EccD1 and EccE1.

It is found in the cytoplasm. Functionally, part of the ESX-1 / type VII specialized secretion system (T7SS), which exports several proteins including EsxA and EsxB. Plays a role in DNA conjugation, in both donor and recipient strains. The polypeptide is ESX-1 secretion system protein EccCb1 (eccCb1) (Mycolicibacterium smegmatis (strain MKD8) (Mycobacterium smegmatis)).